Here is a 234-residue protein sequence, read N- to C-terminus: Enolase-phosphatase E1 (234 aa).

A disordered region spans residues 212–234; the sequence is RPGNYPQPQHSHFKISSFEGLNP.

The protein belongs to the HAD-like hydrolase superfamily. MasA/MtnC family. As to quaternary structure, monomer. Requires Mg(2+) as cofactor.

It catalyses the reaction 5-methylsulfanyl-2,3-dioxopentyl phosphate + H2O = 1,2-dihydroxy-5-(methylsulfanyl)pent-1-en-3-one + phosphate. The protein operates within amino-acid biosynthesis; L-methionine biosynthesis via salvage pathway; L-methionine from S-methyl-5-thio-alpha-D-ribose 1-phosphate: step 3/6. It functions in the pathway amino-acid biosynthesis; L-methionine biosynthesis via salvage pathway; L-methionine from S-methyl-5-thio-alpha-D-ribose 1-phosphate: step 4/6. Its function is as follows. Bifunctional enzyme that catalyzes the enolization of 2,3-diketo-5-methylthiopentyl-1-phosphate (DK-MTP-1-P) into the intermediate 2-hydroxy-3-keto-5-methylthiopentenyl-1-phosphate (HK-MTPenyl-1-P), which is then dephosphorylated to form the acireductone 1,2-dihydroxy-3-keto-5-methylthiopentene (DHK-MTPene). The sequence is that of Enolase-phosphatase E1 from Leptospira interrogans serogroup Icterohaemorrhagiae serovar copenhageni (strain Fiocruz L1-130).